The chain runs to 248 residues: Probable pyridoxal 5'-phosphate synthase subunit pdx2 (248 aa).

70-72 (GES) provides a ligand contact to L-glutamine. Residue cysteine 106 is the Nucleophile of the active site. L-glutamine is bound by residues arginine 136 and 174–175 (IR). Active-site charge relay system residues include histidine 221 and glutamate 223.

It belongs to the glutaminase PdxT/SNO family.

It catalyses the reaction aldehydo-D-ribose 5-phosphate + D-glyceraldehyde 3-phosphate + L-glutamine = pyridoxal 5'-phosphate + L-glutamate + phosphate + 3 H2O + H(+). It carries out the reaction L-glutamine + H2O = L-glutamate + NH4(+). Its pathway is cofactor biosynthesis; pyridoxal 5'-phosphate biosynthesis. Its function is as follows. Catalyzes the hydrolysis of glutamine to glutamate and ammonia as part of the biosynthesis of pyridoxal 5'-phosphate. The resulting ammonia molecule is channeled to the active site of pdx1. The polypeptide is Probable pyridoxal 5'-phosphate synthase subunit pdx2 (Dictyostelium discoideum (Social amoeba)).